Reading from the N-terminus, the 277-residue chain is Digeranylgeranylglyceryl phosphate synthase (277 aa).

A run of 8 helical transmembrane segments spans residues 16 to 36, 40 to 60, 93 to 113, 129 to 149, 153 to 173, 199 to 218, 222 to 244, and 253 to 273; these read ILAGIVGILGSLVAYEGIPPV, ILIFLVVYFGCSAGNTINDYF, FIGLIIALLLGWSAFLFALGA, FIGNVTVALLTAATPIYGAVG, IDLAGYLAICAFLVNVSREIM, SGIIASIFGFLTIISSFLPV, IGLGYLPIIIVDIMIAKASIDVL, and GQKILKFATFIAVISFLLGAL.

Belongs to the UbiA prenyltransferase family. DGGGP synthase subfamily. Mg(2+) serves as cofactor.

The protein resides in the cell membrane. It catalyses the reaction sn-3-O-(geranylgeranyl)glycerol 1-phosphate + (2E,6E,10E)-geranylgeranyl diphosphate = 2,3-bis-O-(geranylgeranyl)-sn-glycerol 1-phosphate + diphosphate. The protein operates within membrane lipid metabolism; glycerophospholipid metabolism. Prenyltransferase that catalyzes the transfer of the geranylgeranyl moiety of geranylgeranyl diphosphate (GGPP) to the C2 hydroxyl of (S)-3-O-geranylgeranylglyceryl phosphate (GGGP). This reaction is the second ether-bond-formation step in the biosynthesis of archaeal membrane lipids. In Pyrococcus horikoshii (strain ATCC 700860 / DSM 12428 / JCM 9974 / NBRC 100139 / OT-3), this protein is Digeranylgeranylglyceryl phosphate synthase.